The sequence spans 269 residues: Glutamate racemase (269 aa).

Substrate is bound by residues aspartate 13–serine 14 and tyrosine 45–serine 46. The Proton donor/acceptor role is filled by cysteine 77. Asparagine 78–threonine 79 is a substrate binding site. Cysteine 188 serves as the catalytic Proton donor/acceptor. Threonine 189 to histidine 190 contributes to the substrate binding site.

Belongs to the aspartate/glutamate racemases family.

It catalyses the reaction L-glutamate = D-glutamate. It participates in cell wall biogenesis; peptidoglycan biosynthesis. In terms of biological role, provides the (R)-glutamate required for cell wall biosynthesis. The protein is Glutamate racemase of Pasteurella multocida (strain Pm70).